A 953-amino-acid chain; its full sequence is Isoleucine--tRNA ligase (953 aa).

The 'HIGH' region motif lies at 57 to 67 (PYANGDIHIGH). Residue glutamate 582 coordinates L-isoleucyl-5'-AMP. Positions 623–627 (KMSKS) match the 'KMSKS' region motif. Lysine 626 serves as a coordination point for ATP. Zn(2+)-binding residues include cysteine 916, cysteine 919, cysteine 936, and cysteine 939.

The protein belongs to the class-I aminoacyl-tRNA synthetase family. IleS type 1 subfamily. In terms of assembly, monomer. Zn(2+) serves as cofactor.

It localises to the cytoplasm. It catalyses the reaction tRNA(Ile) + L-isoleucine + ATP = L-isoleucyl-tRNA(Ile) + AMP + diphosphate. Its function is as follows. Catalyzes the attachment of isoleucine to tRNA(Ile). As IleRS can inadvertently accommodate and process structurally similar amino acids such as valine, to avoid such errors it has two additional distinct tRNA(Ile)-dependent editing activities. One activity is designated as 'pretransfer' editing and involves the hydrolysis of activated Val-AMP. The other activity is designated 'posttransfer' editing and involves deacylation of mischarged Val-tRNA(Ile). This chain is Isoleucine--tRNA ligase, found in Bordetella avium (strain 197N).